The primary structure comprises 139 residues: MANAASGMAVHDDCKLKFMELKTKRTHRFIIYKIEELQKQVIVEKIGEPGQTHEDLAASLPADECRYAIFDFDFVSSEGVPRSRIFFVAWSPDTARVRSKMIYASSKDRFKRELDGIQVELQATDPTEMDLDVFKSRAN.

Positions 5-139 (ASGMAVHDDC…DLDVFKSRAN (135 aa)) constitute an ADF-H domain. Phosphoserine is present on serine 6.

The protein belongs to the actin-binding proteins ADF family.

The protein resides in the cytoplasm. Its subcellular location is the cytoskeleton. Actin-depolymerizing protein. Severs actin filaments (F-actin) and binds to actin monomers. This Arabidopsis thaliana (Mouse-ear cress) protein is Actin-depolymerizing factor 3 (ADF3).